Reading from the N-terminus, the 224-residue chain is MKKAVILVSGGADSATVLAIAREMGYEIHAMSFNYGQRNNAELRKVKELIKEYNVKQHKIVYIDLRAFGGSALTDNNIDVPHYHDVNELPEDVPVTYVPARNTIFLSYALGYAEVIGAKDIFIGVHTSDSANYPDCRPEYIKSFEEMANLATNIGNRITIHTPLIDMAKEQIIKTGLELGVDYKNTISCYDPTEDDLSCGNCLACMIRLDAFKKNNVQDPINYV.

Residue 8–18 (VSGGADSATVL) participates in ATP binding. 4 residues coordinate Zn(2+): C189, C199, C202, and C205.

The protein belongs to the QueC family. Zn(2+) serves as cofactor.

The catalysed reaction is 7-carboxy-7-deazaguanine + NH4(+) + ATP = 7-cyano-7-deazaguanine + ADP + phosphate + H2O + H(+). The protein operates within purine metabolism; 7-cyano-7-deazaguanine biosynthesis. In terms of biological role, catalyzes the ATP-dependent conversion of 7-carboxy-7-deazaguanine (CDG) to 7-cyano-7-deazaguanine (preQ(0)). The sequence is that of 7-cyano-7-deazaguanine synthase from Rickettsia felis (strain ATCC VR-1525 / URRWXCal2) (Rickettsia azadi).